We begin with the raw amino-acid sequence, 1342 residues long: DNA-directed RNA polymerase subunit beta (1342 aa).

Belongs to the RNA polymerase beta chain family. As to quaternary structure, the RNAP catalytic core consists of 2 alpha, 1 beta, 1 beta' and 1 omega subunit. When a sigma factor is associated with the core the holoenzyme is formed, which can initiate transcription.

It carries out the reaction RNA(n) + a ribonucleoside 5'-triphosphate = RNA(n+1) + diphosphate. Its function is as follows. DNA-dependent RNA polymerase catalyzes the transcription of DNA into RNA using the four ribonucleoside triphosphates as substrates. The sequence is that of DNA-directed RNA polymerase subunit beta from Cronobacter sakazakii (strain ATCC BAA-894) (Enterobacter sakazakii).